Reading from the N-terminus, the 876-residue chain is MACRFPLHSSSPSQFLSPENRQRLPRNYPSISCQNNSATNVVHEDGDDNDKAKTNQVNLLAIPITLTIISASLAKPSFAAAKVTERKRTQKKPQEALTLEQLKAWSKDLPVVSNRIPYTDILSLKAEGKLKHVIKPPNLSLRQKAEPVLVVLEDSRVLRTVLPSLEGNKRFWEQWDELGIDVQCVNAYTPPVKRPPVPSPYLGFLWKVPAYMLTWVKPKKESKRAAELKRMREDFKRQRKEEIETMKEERVMMEKTMKAQKKQQERKKRKAVRKKKYEESLREARKNYRDMADMWARLAQDPNVATALGLVFFYIFYRVVVLNYRKQKKDYEDRLKIEKAEADERKKMRELEREMEGIEEEDEEVEEGTGEKNPYLQMAMQFMKSGARVRRASNKRLPEYLERGVDVKFTDVAGLGKIRLELEEIVKFFTHGEMYRRRGVKIPGGILLCGPPGVGKTLLAKAVAGEAGVNFFSISASQFVEIYVGVGASRVRALYQEARENAPSVVFIDELDAVGRERGLIKGSGGQERDATLNQLLVSLDGFEGRGEVITIASTNRPDILDPALVRPGRFDRKIFIPKPGLIGRMEILQVHARKKPMAEDLDYMAVASMTDGMVGAELANIVEIAAINMMRDGRTELTTDDLLQAAQIEERGMLDRKDRSLETWRQVAINEAAMAVVAVNFPDMKNIEFLTINPRAGRELGYVRVKMDHIKFKEGMLSRQSILDHITVQLAPRAADELWYGEDQLSTIWAETSDNARSAARSLVLGGLSDKHHGLNNFWVADRINDIDVEALRILNMCYERAKEILGRNRTLMDEVVEKLVQKKSLTKQEFFTLVELYGSSKPMPPSILELRKIKRLELEEMVLKLDMTTARNSS.

The tract at residues 1 to 20 (MACRFPLHSSSPSQFLSPEN) is disordered. The N-terminal 32 residues, 1–32 (MACRFPLHSSSPSQFLSPENRQRLPRNYPSIS), are a transit peptide targeting the chloroplast. The span at 8–19 (HSSSPSQFLSPE) shows a compositional bias: polar residues. The helical transmembrane segment at 59-79 (LLAIPITLTIISASLAKPSFA) threads the bilayer. Residues 256–276 (TMKAQKKQQERKKRKAVRKKK) form a disordered region. The span at 258-275 (KAQKKQQERKKRKAVRKK) shows a compositional bias: basic residues. A helical membrane pass occupies residues 304 to 324 (VATALGLVFFYIFYRVVVLNY). The tract at residues 350-370 (ELEREMEGIEEEDEEVEEGTG) is disordered. A compositionally biased stretch (acidic residues) spans 357-368 (GIEEEDEEVEEG). 450–457 (GPPGVGKT) lines the ATP pocket.

In the N-terminal section; belongs to the AAA ATPase family. This sequence in the C-terminal section; belongs to the peptidase M41 family. Homooligomer. Interacts with FtsHi4.

It is found in the plastid. The protein localises to the chloroplast membrane. In terms of biological role, required for plastid development during embryogenesis. Might be involved in chaperone functions or play a structural role in the thylakoid FtsH complex. The protein is Probable inactive ATP-dependent zinc metalloprotease FTSHI 2, chloroplastic of Arabidopsis thaliana (Mouse-ear cress).